Here is an 86-residue protein sequence, read N- to C-terminus: uncharacterized protein (86 aa).

The first 31 residues, 1 to 31 (MKQKLLLSGLAVSTVGITSYLLKDPSNRQKA), serve as a signal peptide directing secretion. A disordered region spans residues 46–69 (PDMETFPVDKAGHPDPQDIEDNKM). A compositionally biased stretch (basic and acidic residues) spans 55-69 (KAGHPDPQDIEDNKM).

This is an uncharacterized protein from Bacillus subtilis (strain 168).